The following is a 1224-amino-acid chain: A disintegrin and metalloproteinase with thrombospondin motifs 16 (1224 aa).

Residues 1-24 (MKPRARGWRGLAALWMLLAQVAEQ) form the signal peptide. Positions 25 to 279 (APACAMGPAA…EYKSCLRHKR (255 aa)) are excised as a propeptide. The disordered stretch occupies residues 31-53 (GPAAAAPGSPSVPRPPPPAERPG). Over residues 40-50 (PSVPRPPPPAE) the composition is skewed to pro residues. An N-linked (GlcNAc...) asparagine glycan is attached at Asn-156. The Cysteine switch motif lies at 247–254 (HFCGRRKK). Cys-249 serves as a coordination point for Zn(2+). One can recognise a Peptidase M12B domain in the interval 290–495 (LNVETLVVVD…AQAICLADQP (206 aa)). The N-linked (GlcNAc...) asparagine glycan is linked to Asn-310. Intrachain disulfides connect Cys-366–Cys-417, Cys-392–Cys-399, Cys-411–Cys-490, Cys-450–Cys-474, Cys-518–Cys-543, Cys-529–Cys-550, Cys-538–Cys-569, Cys-563–Cys-574, Cys-598–Cys-635, Cys-602–Cys-640, and Cys-613–Cys-625. Zn(2+) is bound at residue His-433. The active site involves Glu-434. The Zn(2+) site is built by His-437 and His-443. The Disintegrin domain occupies 496-585 (KPVKEYKYPE…KYGDEGPKPT (90 aa)). One can recognise a TSP type-1 1 domain in the interval 586–641 (HGHWSDWSSWSPCSRTCGGGVSHRSRLCTNPKPSHGGKFCEGSTRTLKLCNSQKCP). Asn-741, Asn-780, Asn-835, Asn-905, and Asn-935 each carry an N-linked (GlcNAc...) asparagine glycan. The segment at 747–873 (IHRGLYTKHH…KQPPAQPSYT (127 aa)) is spacer. TSP type-1 domains follow at residues 874–922 (WAIV…LVPC), 927–987 (CPPS…QSCP), 988–1048 (PAWS…QRCH), 1051–1115 (KKLQ…LPCP), and 1127–1181 (RGSW…HFCP). 3 disulfide bridges follow: Cys-939–Cys-981, Cys-943–Cys-986, and Cys-954–Cys-970. A PLAC domain is found at 1186-1223 (KDAFCKDYFHWCYLVPQHGMCSHKFYGKQCCKTCSKSN).

Requires Zn(2+) as cofactor. In terms of processing, the precursor is cleaved by a furin endopeptidase. Glycosylated. Can be O-fucosylated by POFUT2 on a serine or a threonine residue found within the consensus sequence C1-X(2)-(S/T)-C2-G of the TSP type-1 repeat domains where C1 and C2 are the first and second cysteine residue of the repeat, respectively. Fucosylated repeats can then be further glycosylated by the addition of a beta-1,3-glucose residue by the glucosyltransferase, B3GALTL. Fucosylation mediates the efficient secretion of ADAMTS family members. Can also be C-glycosylated with one or two mannose molecules on tryptophan residues within the consensus sequence W-X-X-W of the TPRs, and N-glycosylated. These other glycosylations can also facilitate secretion. In terms of tissue distribution, expressed in fetal lung and kidney and in adult prostate and ovary.

Its subcellular location is the secreted. It localises to the extracellular space. It is found in the extracellular matrix. In Homo sapiens (Human), this protein is A disintegrin and metalloproteinase with thrombospondin motifs 16 (ADAMTS16).